The primary structure comprises 330 residues: Membrane progestin receptor gamma (330 aa).

Topologically, residues 1 to 51 are cytoplasmic; it reads MLSLKLPRLFSIDQIPQVFHEQGILFGYRHPQSSATACILSLFQMTNETLN. Residues 52 to 72 form a helical membrane-spanning segment; the sequence is IWTHLLPFWFFAWRFVTALYM. Residues 73–80 lie on the Extracellular side of the membrane; it reads TDIKNDSY. A helical transmembrane segment spans residues 81 to 101; sequence SWPMLVYMCTSCVYPLVSSCA. Residues 102–113 are Cytoplasmic-facing; sequence HTFSSMSKNARH. Residues 114 to 134 traverse the membrane as a helical segment; it reads ICYFLDYGAVNLFSLGSAIAY. The Extracellular portion of the chain corresponds to 135-141; that stretch reads SAYTFPD. Residues 142–162 traverse the membrane as a helical segment; sequence ALMCTTFHDYYVALAVLNTIL. The Cytoplasmic segment spans residues 163 to 186; it reads STGLSCYSRFLEIQKPRLCKVIRV. A helical membrane pass occupies residues 187–207; it reads LAFAYPYTWDSLPIFYRLFLF. The Extracellular portion of the chain corresponds to 208 to 253; sequence PGESAQNEATSYHQKHMIMTLLASFLYSAHLPERLAPGRFDYIGHS. Residues 254–274 form a helical membrane-spanning segment; the sequence is HQLFHVCVILATHMQMEAILL. Residues 275–294 lie on the Cytoplasmic side of the membrane; sequence DKTLRKEWLLATSKPFSFSQ. Residues 295 to 315 form a helical membrane-spanning segment; sequence IAGAILLCIIFSLSNIIYFSA. The Extracellular segment spans residues 316–330; that stretch reads ALYRIPKPELHKKET.

The protein belongs to the ADIPOR family. As to expression, expressed in the brain, lung, kidney, colon, adrenal and lung.

It localises to the cell membrane. In terms of biological role, plasma membrane progesterone (P4) receptor coupled to G proteins. Seems to act through a G(i) mediated pathway. May be involved in oocyte maturation. In Homo sapiens (Human), this protein is Membrane progestin receptor gamma.